The sequence spans 565 residues: Sensor histidine kinase YpdA (565 aa).

Residues Met1–Glu3 lie on the Cytoplasmic side of the membrane. Residues Ile4–Phe24 traverse the membrane as a helical segment. The Periplasmic segment spans residues Leu25–Leu45. The chain crosses the membrane as a helical span at residues Leu46–Val66. At Glu67–Arg74 the chain is on the cytoplasmic side. A helical membrane pass occupies residues Ile75–Val95. Over Ile96 to Gly107 the chain is Periplasmic. Residues Gly108–Ile128 form a helical membrane-spanning segment. The Cytoplasmic portion of the chain corresponds to Asn129 to Arg139. Residues Val140–Ala160 traverse the membrane as a helical segment. At Pro161–Lys172 the chain is on the periplasmic side. A helical transmembrane segment spans residues Ile173–Ser193. Residues Val194 to Leu565 are Cytoplasmic-facing. Positions Val223 to Thr342 constitute a GAF domain. A Histidine kinase domain is found at Gln343–Arg554. The residue at position 371 (His371) is a Phosphohistidine; by autocatalysis.

As to quaternary structure, interacts with BtsT and YhjX. Autophosphorylated.

Its subcellular location is the cell inner membrane. It carries out the reaction ATP + protein L-histidine = ADP + protein N-phospho-L-histidine.. Its function is as follows. Member of the two-component regulatory system YpdA/YpdB, which is part of a nutrient-sensing regulatory network composed of YpdA/YpdB, the high-affinity pyruvate signaling system BtsS/BtsR and their respective target proteins, YhjX and BtsT. YpdA activates YpdB by phosphorylation in response to high concentrations of extracellular pyruvate. Activation of the YpdA/YpdB signaling cascade also promotes BtsS/BtsR-mediated btsT expression. In Escherichia coli (strain K12), this protein is Sensor histidine kinase YpdA (ypdA).